The sequence spans 769 residues: MMAKPNGKIQFKNLQSHGVLADPDFPKRTWKLLKTAMRQIHQQNASNLSFEELYRNGYNMVLQKHGDLLYNNLKKMVDKHLKAVAKTVSESIDEKFLLELNSSWINHKTSMLMIRDILMYMDRNYVKQNNLSSVFDLGLYLFRDNVAHCSTIKDRLLNTLLSMVQKEREGEVIDRILIKNIVQMLIDLGVNSKNVYIEDFEKPLLLKTSSHYQAQSQTLIQTCSCPDYMKKVEICLKEELERVSHYLDSSSEPKLKEVCEKQLISNHMRTLIDMENSGLISMLKDDKIEDLKRMYNLFSRVSDGLNLMKDVISSYVKEIGRGIVMDEEKTKESGTYFQSLLDLKDKYDNLLQNALYNDKQFIHSIQQAFEYFINLNPKSPEYISLFIDEKLKKGLKGVSEEEVDIILDKILMLFRLIQEKDVFEKYYKQHLAKRLLLGRSISDDAERNMIAKLKTECGYQFTSKLEGMFTDMRLSQDTMSGFKTYIQNLKKALPIDLNVHVLTTGFWPTQNTANCNLPREILLCCEAFKSYYLSNHNGRLLLWQTNMGTAEIKANFPSKSHELQVSSYQMVILLLFNDQSKLTFKEIADQTGIPTIDLKRNLLALTNPKNKILDRELPSTTSSTTTTTTTATSSSTSTSPSSSSSSISTPTPSKSIDESDVFAFNTKFKSKLFRVKVMAVVQKETPVEEKETRDKVDEDRKHQIEASIVRIMKARKTLEHSNLVSEVIKQLQSRFVPNPVIVKKRIESLIEREYLERSKQDRKIYNYMA.

The disordered stretch occupies residues 614–655 (DRELPSTTSSTTTTTTTATSSSTSTSPSSSSSSISTPTPSKS). The span at 618 to 653 (PSTTSSTTTTTTTATSSSTSTSPSSSSSSISTPTPS) shows a compositional bias: low complexity. One can recognise a Cullin neddylation domain in the interval 699 to 761 (DRKHQIEASI…REYLERSKQD (63 aa)). Lys713 is covalently cross-linked (Glycyl lysine isopeptide (Lys-Gly) (interchain with G-Cter in NEDD8)).

This sequence belongs to the cullin family. Post-translationally, neddylated. Deneddylated via its interaction with the COP9 signalosome (CSN) complex.

The protein resides in the nucleus. Its pathway is protein modification; protein ubiquitination. Probable core component of cullin-based SCF-like E3 ubiquitin-protein ligase complexes which mediate the ubiquitination and subsequent proteasomal degradation of target proteins. The E3 ubiquitin-protein ligase activity of the complex is dependent on the neddylation of the cullin subunit. The sequence is that of Cullin-3 (culC) from Dictyostelium discoideum (Social amoeba).